An 870-amino-acid chain; its full sequence is Valine--tRNA ligase (870 aa).

Positions 42 to 52 (PNVTGVLHIGH) match the 'HIGH' region motif. Residues 527 to 531 (KMSKS) carry the 'KMSKS' region motif. Lys530 contributes to the ATP binding site. A coiled-coil region spans residues 800 to 870 (LENVDLSGIL…ISVELQNLRG (71 aa)).

This sequence belongs to the class-I aminoacyl-tRNA synthetase family. ValS type 1 subfamily. Monomer.

The protein resides in the cytoplasm. It carries out the reaction tRNA(Val) + L-valine + ATP = L-valyl-tRNA(Val) + AMP + diphosphate. Functionally, catalyzes the attachment of valine to tRNA(Val). As ValRS can inadvertently accommodate and process structurally similar amino acids such as threonine, to avoid such errors, it has a 'posttransfer' editing activity that hydrolyzes mischarged Thr-tRNA(Val) in a tRNA-dependent manner. This is Valine--tRNA ligase from Campylobacter jejuni subsp. jejuni serotype O:2 (strain ATCC 700819 / NCTC 11168).